The primary structure comprises 491 residues: Arginine decarboxylase (491 aa).

An N6-(pyridoxal phosphate)lysine modification is found at Lys-227.

It belongs to the Orn/Lys/Arg decarboxylase class-I family. The cofactor is pyridoxal 5'-phosphate.

The protein resides in the cytoplasm. The catalysed reaction is L-arginine + H(+) = agmatine + CO2. The protein operates within amine and polyamine biosynthesis; agmatine biosynthesis; agmatine from L-arginine: step 1/1. Its function is as follows. Catalyzes the formation of agmatine from arginine. The protein is Arginine decarboxylase (speA) of Halalkalibacterium halodurans (strain ATCC BAA-125 / DSM 18197 / FERM 7344 / JCM 9153 / C-125) (Bacillus halodurans).